The following is a 224-amino-acid chain: Cytidylate kinase (224 aa).

12–20 (GPSGAGKGT) contributes to the ATP binding site.

The protein belongs to the cytidylate kinase family. Type 1 subfamily.

The protein resides in the cytoplasm. The enzyme catalyses CMP + ATP = CDP + ADP. It carries out the reaction dCMP + ATP = dCDP + ADP. The polypeptide is Cytidylate kinase (Aliivibrio salmonicida (strain LFI1238) (Vibrio salmonicida (strain LFI1238))).